The sequence spans 146 residues: VHWTAEEKQLITGLWGKVNVAECGAEALARLLIVYPWTQRFFASFGNLSSATAITGNPMVRAHGKKVLTSFGEAVKNLDNIKATFAQLSELHCDKLHVDPENFRLLGDILIIVLAAHFAKDFTPECQAAWQKLVGAVAHALARKYH.

The Globin domain occupies 2-146; sequence HWTAEEKQLI…VAHALARKYH (145 aa). Heme b-binding residues include His63 and His92.

It belongs to the globin family. In terms of assembly, heterotetramer of two alpha chains and two beta chains. Red blood cells.

Functionally, involved in oxygen transport from the lung to the various peripheral tissues. The chain is Hemoglobin subunit beta (HBB) from Phalacrocorax carbo (Great cormorant).